Consider the following 66-residue polypeptide: ATP synthase F(0) complex subunit 8 (66 aa).

Residues 8–24 traverse the membrane as a helical segment; it reads IWLLAVVIVLTTLMIFL. The residue at position 54 (K54) is an N6-acetyllysine; alternate. The residue at position 54 (K54) is an N6-succinyllysine; alternate. Position 57 is an N6-acetyllysine (K57).

The protein belongs to the ATPase protein 8 family. As to quaternary structure, component of the ATP synthase complex composed at least of ATP5F1A/subunit alpha, ATP5F1B/subunit beta, ATP5MC1/subunit c (homooctomer), MT-ATP6/subunit a, MT-ATP8/subunit 8, ATP5ME/subunit e, ATP5MF/subunit f, ATP5MG/subunit g, ATP5MK/subunit k, ATP5MJ/subunit j, ATP5F1C/subunit gamma, ATP5F1D/subunit delta, ATP5F1E/subunit epsilon, ATP5PF/subunit F6, ATP5PB/subunit b, ATP5PD/subunit d, ATP5PO/subunit OSCP. ATP synthase complex consists of a soluble F(1) head domain (subunits alpha(3) and beta(3)) - the catalytic core - and a membrane F(0) domain - the membrane proton channel (subunits c, a, 8, e, f, g, k and j). These two domains are linked by a central stalk (subunits gamma, delta, and epsilon) rotating inside the F1 region and a stationary peripheral stalk (subunits F6, b, d, and OSCP). Interacts with PRICKLE3.

It is found in the mitochondrion membrane. In terms of biological role, subunit 8, of the mitochondrial membrane ATP synthase complex (F(1)F(0) ATP synthase or Complex V) that produces ATP from ADP in the presence of a proton gradient across the membrane which is generated by electron transport complexes of the respiratory chain. ATP synthase complex consist of a soluble F(1) head domain - the catalytic core - and a membrane F(1) domain - the membrane proton channel. These two domains are linked by a central stalk rotating inside the F(1) region and a stationary peripheral stalk. During catalysis, ATP synthesis in the catalytic domain of F(1) is coupled via a rotary mechanism of the central stalk subunits to proton translocation. In vivo, can only synthesize ATP although its ATP hydrolase activity can be activated artificially in vitro. Part of the complex F(0) domain. This chain is ATP synthase F(0) complex subunit 8, found in Loxodonta africana (African elephant).